The chain runs to 69 residues: DNA-directed RNA polymerase subunit omega (69 aa).

It belongs to the RNA polymerase subunit omega family. The RNAP catalytic core consists of 2 alpha, 1 beta, 1 beta' and 1 omega subunit. When a sigma factor is associated with the core the holoenzyme is formed, which can initiate transcription.

The catalysed reaction is RNA(n) + a ribonucleoside 5'-triphosphate = RNA(n+1) + diphosphate. Functionally, promotes RNA polymerase assembly. Latches the N- and C-terminal regions of the beta' subunit thereby facilitating its interaction with the beta and alpha subunits. The protein is DNA-directed RNA polymerase subunit omega of Carboxydothermus hydrogenoformans (strain ATCC BAA-161 / DSM 6008 / Z-2901).